The primary structure comprises 400 residues: WD repeat and FYVE domain-containing protein 2 (400 aa).

WD repeat units follow at residues 22 to 61, 66 to 105, 112 to 150, 153 to 192, 197 to 236, and 240 to 279; these read GSQE…QYWP, AMPS…NKMT, AHQS…QRLG, RTSA…CTLL, GHTG…GTAI, and GHND…QETP. An FYVE-type zinc finger spans residues 281–352; sequence WLDSDSCQKC…VCDSCHEAIT (72 aa). Cysteine 287, cysteine 290, cysteine 314, cysteine 317, cysteine 322, cysteine 325, cysteine 344, and cysteine 347 together coordinate Zn(2+). The WD 7 repeat unit spans residues 364-399; that stretch reads DSKHNIVHVHFDATRGWLLTSGTDKVIKLWDMTPVV.

As to quaternary structure, homodimer. Interacts (via WD repeats 1-3) with AKT1, AKT2, PRKCZ and PRKCI. Interacts with VAMP2. Forms a complex with VAMP2 and PRKCZ. Interacts with FOXO1. Forms a complex with AKT1 and FOXO1. In terms of tissue distribution, highly expressed in the brain (at protein level).

It is found in the endosome. The protein resides in the early endosome. Its subcellular location is the cytoplasm. Acts in an adapter protein-like fashion to mediate the interaction between the kinase PRKCZ and its substrate VAMP2 and increases the PRKCZ-dependent phosphorylation of VAMP2. Positively regulates adipocyte differentiation, by facilitating the phosphorylation and thus inactivation of the anti-adipogenetic transcription factor FOXO1 by the kinase AKT1. Plays a role in endosomal control of AKT2 signaling; required for insulin-stimulated AKT2 phosphorylation and glucose uptake and insulin-stimulated phosphorylation of AKT2 substrates. Participates in transferrin receptor endocytosis. This chain is WD repeat and FYVE domain-containing protein 2 (Wdfy2), found in Mus musculus (Mouse).